Reading from the N-terminus, the 416-residue chain is Protein P47 (416 aa).

Belongs to the TULIP P47 family. In terms of assembly, part of a crude toxin extract that includes BoNTA2/NTNH, P47, OrfX2 and OrfX3; OrfX1 was not detected.

Functionally, part of a botulinum neurotoxin type A2 (BoNT) locus; may be part of a progenitor toxin complex required to protect BoNT during its passage through the host gastrointestinal tract. This is Protein P47 from Clostridium botulinum (strain Kyoto / Type A2).